The following is a 354-amino-acid chain: Holliday junction branch migration complex subunit RuvB (354 aa).

Residues Met-1–Tyr-183 form a large ATPase domain (RuvB-L) region. ATP-binding positions include Arg-23, Gly-64, Lys-67, Thr-68, Ser-69, Glu-130–Phe-132, Arg-173, Tyr-183, and Arg-220. Thr-68 contacts Mg(2+). The tract at residues Ser-184–Asp-254 is small ATPAse domain (RuvB-S). The interval Ala-257–Pro-354 is head domain (RuvB-H). DNA contacts are provided by Arg-312 and Arg-317.

This sequence belongs to the RuvB family. As to quaternary structure, homohexamer. Forms an RuvA(8)-RuvB(12)-Holliday junction (HJ) complex. HJ DNA is sandwiched between 2 RuvA tetramers; dsDNA enters through RuvA and exits via RuvB. An RuvB hexamer assembles on each DNA strand where it exits the tetramer. Each RuvB hexamer is contacted by two RuvA subunits (via domain III) on 2 adjacent RuvB subunits; this complex drives branch migration. In the full resolvosome a probable DNA-RuvA(4)-RuvB(12)-RuvC(2) complex forms which resolves the HJ.

It localises to the cytoplasm. The enzyme catalyses ATP + H2O = ADP + phosphate + H(+). Its function is as follows. The RuvA-RuvB-RuvC complex processes Holliday junction (HJ) DNA during genetic recombination and DNA repair, while the RuvA-RuvB complex plays an important role in the rescue of blocked DNA replication forks via replication fork reversal (RFR). RuvA specifically binds to HJ cruciform DNA, conferring on it an open structure. The RuvB hexamer acts as an ATP-dependent pump, pulling dsDNA into and through the RuvAB complex. RuvB forms 2 homohexamers on either side of HJ DNA bound by 1 or 2 RuvA tetramers; 4 subunits per hexamer contact DNA at a time. Coordinated motions by a converter formed by DNA-disengaged RuvB subunits stimulates ATP hydrolysis and nucleotide exchange. Immobilization of the converter enables RuvB to convert the ATP-contained energy into a lever motion, pulling 2 nucleotides of DNA out of the RuvA tetramer per ATP hydrolyzed, thus driving DNA branch migration. The RuvB motors rotate together with the DNA substrate, which together with the progressing nucleotide cycle form the mechanistic basis for DNA recombination by continuous HJ branch migration. Branch migration allows RuvC to scan DNA until it finds its consensus sequence, where it cleaves and resolves cruciform DNA. The polypeptide is Holliday junction branch migration complex subunit RuvB (Salinispora tropica (strain ATCC BAA-916 / DSM 44818 / JCM 13857 / NBRC 105044 / CNB-440)).